Reading from the N-terminus, the 81-residue chain is Small cysteine-rich protein 1 1 (81 aa).

The N-terminal stretch at 1-19 is a signal peptide; it reads MGVHFNICLLLLLVATISS. Residues 20 to 39 constitute a propeptide that is removed on maturation; the sequence is QTLKATEKDDSTDENPFGIY.

It belongs to the Cnidaria small cysteine-rich protein (SCRiP) family. alpha subfamily. Post-translationally, the basic myotoxic domain of rattlesnake crotamine toxins (with 6 Cys residues) has been detected in this protein. However, this protein contains 2 additional Cys at the C-terminal region. Hence, this protein may contain 4 disulfide bonds instead of the 3 suggested by the myotoxin domain.

It is found in the secreted. Its subcellular location is the nematocyst. Functionally, induces neurotoxic symptoms on zebrafish. Has also been claimed to be implied in calcification, but tests on homolog proteins suggest that proteins of this family have a neurotoxic function and not a calcification function. This Montipora capitata (Rice coral) protein is Small cysteine-rich protein 1 1.